The chain runs to 166 residues: Phosphopantetheine adenylyltransferase (166 aa).

S10 contacts substrate. ATP is bound by residues 10 to 11 and H18; that span reads SF. Substrate-binding residues include K42, A79, and R93. Residues 94 to 96, E104, and 129 to 135 each bind ATP; these read GLR and VRPITAT.

The protein belongs to the bacterial CoaD family. Homohexamer. It depends on Mg(2+) as a cofactor.

It is found in the cytoplasm. The catalysed reaction is (R)-4'-phosphopantetheine + ATP + H(+) = 3'-dephospho-CoA + diphosphate. It participates in cofactor biosynthesis; coenzyme A biosynthesis; CoA from (R)-pantothenate: step 4/5. Its function is as follows. Reversibly transfers an adenylyl group from ATP to 4'-phosphopantetheine, yielding dephospho-CoA (dPCoA) and pyrophosphate. The sequence is that of Phosphopantetheine adenylyltransferase from Methylobacterium sp. (strain 4-46).